Consider the following 385-residue polypeptide: S-adenosylmethionine synthase (385 aa).

Residue histidine 16 coordinates ATP. Aspartate 18 lines the Mg(2+) pocket. Glutamate 44 is a binding site for K(+). L-methionine is bound by residues glutamate 57 and glutamine 100. The segment at 100-110 (QSPDINQGVDR) is flexible loop. Residues 164 to 166 (DGK), 230 to 231 (KF), aspartate 239, 245 to 246 (RK), alanine 262, and lysine 266 each bind ATP. An L-methionine-binding site is contributed by aspartate 239. Lysine 270 serves as a coordination point for L-methionine.

It belongs to the AdoMet synthase family. In terms of assembly, homotetramer; dimer of dimers. Mg(2+) is required as a cofactor. K(+) serves as cofactor.

It localises to the cytoplasm. The enzyme catalyses L-methionine + ATP + H2O = S-adenosyl-L-methionine + phosphate + diphosphate. It functions in the pathway amino-acid biosynthesis; S-adenosyl-L-methionine biosynthesis; S-adenosyl-L-methionine from L-methionine: step 1/1. Functionally, catalyzes the formation of S-adenosylmethionine (AdoMet) from methionine and ATP. The overall synthetic reaction is composed of two sequential steps, AdoMet formation and the subsequent tripolyphosphate hydrolysis which occurs prior to release of AdoMet from the enzyme. The chain is S-adenosylmethionine synthase from Helicobacter pylori (strain J99 / ATCC 700824) (Campylobacter pylori J99).